The following is a 194-amino-acid chain: Fe/S biogenesis protein NfuA (194 aa).

[4Fe-4S] cluster is bound by residues Cys-152 and Cys-155.

The protein belongs to the NfuA family. In terms of assembly, homodimer. [4Fe-4S] cluster is required as a cofactor.

In terms of biological role, involved in iron-sulfur cluster biogenesis. Binds a 4Fe-4S cluster, can transfer this cluster to apoproteins, and thereby intervenes in the maturation of Fe/S proteins. Could also act as a scaffold/chaperone for damaged Fe/S proteins. This is Fe/S biogenesis protein NfuA from Teredinibacter turnerae (strain ATCC 39867 / T7901).